Here is a 180-residue protein sequence, read N- to C-terminus: Oligoribonuclease (180 aa).

Residues 7-170 enclose the Exonuclease domain; sequence LIWIDLEMTG…DDIRESIAEL (164 aa). Y128 is an active-site residue.

This sequence belongs to the oligoribonuclease family.

Its subcellular location is the cytoplasm. In terms of biological role, 3'-to-5' exoribonuclease specific for small oligoribonucleotides. The chain is Oligoribonuclease from Pseudomonas putida (strain ATCC 700007 / DSM 6899 / JCM 31910 / BCRC 17059 / LMG 24140 / F1).